A 676-amino-acid chain; its full sequence is MGKTRRNRVRNRTDPIAKPVKPPTDPELAKLREDKILPVLKDLKSPDAKSRTTAAGAIANIVQDAKCRKLLLREQVVHIVLTETLTDNNIDSRAAGWEILKVLAQEEEADFCVHLYRLDVLTAIEHAAKAVLETLTTSEPPFSKLLKAQQRLVWDITGSLLVLIGLLALARDEIHEAVATKQTILRLLFRLISADIAPQDIYEEAISCLTTLSEDNLKVGQAITDDQETHVYDVLLKLATGTDPRAVMACGVLHNVFTSLQWMDHSPGKDGACDAILIPTLTRALEHVVPGGAKFNGDARYANITLLALVTLASIGTDFQETLVKGNQGSRESPISAADEEWNGFDDADGDAMDVDQKSSSGEDQEEDYEEIDVKEDDEDDDDDSITSEMQADMERVVGADGTDDGDLEDLPTLRELIQTAVPQLIRLSNLPIDSDESLTIQSHALSALNNISWTISCLEFANGENANIHNAWYPTAKKIWRKTILPILEADSADLKLATQVTSLAWAVARVLHGETPTDGNPHRKFISLYHSSKQQAGGNSNSIEEPEDPFQGLGVKCIGVVGSLAHDPAPIEVNREVGVFLVTLLRQSNNVPPAEIVEALNQLFDIYGDEELACDKEVFWKDGFLKHLEEFLPKMRTLTKGIDKRTQPELRTRADEALLNLGRFVQYKKKHAPK.

Residues 1–10 (MGKTRRNRVR) show a composition bias toward basic residues. Positions 1–28 (MGKTRRNRVRNRTDPIAKPVKPPTDPEL) are disordered. An ARM 1 repeat occupies 183–216 (TILRLLFRLISADIAPQDIYEEAISCLTTLSEDN). Residues 325 to 385 (KGNQGSRESP…EDDEDDDDDS (61 aa)) form a disordered region. Acidic residues-rich tracts occupy residues 338–354 (ADEEWNGFDDADGDAMD) and 363–385 (EDQEEDYEEIDVKEDDEDDDDDS). An ARM 2 repeat occupies 420 to 453 (TAVPQLIRLSNLPIDSDESLTIQSHALSALNNIS).

This sequence belongs to the nuclear import and ribosome assembly adapter family. In terms of assembly, component of a hexameric 5S RNP precursor complex, composed of 5S RNA, RRS1, RPF2, RPL5, RPL11 and SYO1; this complex acts as a precursor for ribosome assembly.

Involved in ribosomal large subunit assembly. This is Symportin 1 from Chaetomium thermophilum (strain DSM 1495 / CBS 144.50 / IMI 039719) (Thermochaetoides thermophila).